Reading from the N-terminus, the 717-residue chain is Polyribonucleotide nucleotidyltransferase (717 aa).

Aspartate 487 and aspartate 493 together coordinate Mg(2+). One can recognise a KH domain in the interval 554–613; it reads PKIITMAINPDKIRDVIGPSGKQINKIIEETGVKIDIEQDGTVFISSINQEMNEKAKKII. One can recognise an S1 motif domain in the interval 623–691; the sequence is GEIYLGKVKR…KQGRVNLSRK (69 aa).

Belongs to the polyribonucleotide nucleotidyltransferase family. Mg(2+) is required as a cofactor.

Its subcellular location is the cytoplasm. It carries out the reaction RNA(n+1) + phosphate = RNA(n) + a ribonucleoside 5'-diphosphate. In terms of biological role, involved in mRNA degradation. Catalyzes the phosphorolysis of single-stranded polyribonucleotides processively in the 3'- to 5'-direction. The polypeptide is Polyribonucleotide nucleotidyltransferase (Bacillus mycoides (strain KBAB4) (Bacillus weihenstephanensis)).